Consider the following 750-residue polypeptide: Photosystem I P700 chlorophyll a apoprotein A1 (750 aa).

The next 8 membrane-spanning stretches (helical) occupy residues 70 to 93 (VFSA…FHGA), 156 to 179 (LYCT…FHYH), 195 to 219 (LNHH…HVSL), 291 to 309 (IAHH…GHMY), 346 to 369 (WHAQ…HHMY), 385 to 411 (LSLF…IFMV), 433 to 455 (AIIS…LYIH), and 531 to 549 (FLVH…LILL). [4Fe-4S] cluster contacts are provided by C573 and C582. A run of 2 helical transmembrane segments spans residues 589–610 (HVFL…HFSW) and 664–686 (LSAY…MFLF). H675 is a chlorophyll a' binding site. M683 and Y691 together coordinate chlorophyll a. W692 serves as a coordination point for phylloquinone. The helical transmembrane segment at 724 to 744 (AVGVTHYLLGGIATTWAFFLA) threads the bilayer.

The protein belongs to the PsaA/PsaB family. As to quaternary structure, the PsaA/B heterodimer binds the P700 chlorophyll special pair and subsequent electron acceptors. PSI consists of a core antenna complex that captures photons, and an electron transfer chain that converts photonic excitation into a charge separation. The eukaryotic PSI reaction center is composed of at least 11 subunits. It depends on P700 is a chlorophyll a/chlorophyll a' dimer, A0 is one or more chlorophyll a, A1 is one or both phylloquinones and FX is a shared 4Fe-4S iron-sulfur center. as a cofactor.

It localises to the plastid. The protein localises to the chloroplast thylakoid membrane. It catalyses the reaction reduced [plastocyanin] + hnu + oxidized [2Fe-2S]-[ferredoxin] = oxidized [plastocyanin] + reduced [2Fe-2S]-[ferredoxin]. Functionally, psaA and PsaB bind P700, the primary electron donor of photosystem I (PSI), as well as the electron acceptors A0, A1 and FX. PSI is a plastocyanin-ferredoxin oxidoreductase, converting photonic excitation into a charge separation, which transfers an electron from the donor P700 chlorophyll pair to the spectroscopically characterized acceptors A0, A1, FX, FA and FB in turn. Oxidized P700 is reduced on the lumenal side of the thylakoid membrane by plastocyanin. This is Photosystem I P700 chlorophyll a apoprotein A1 from Pelargonium hortorum (Common geranium).